A 199-amino-acid polypeptide reads, in one-letter code: GTP cyclohydrolase-2 (199 aa).

R49–E53 serves as a coordination point for GTP. 3 residues coordinate Zn(2+): C54, C65, and C67. GTP-binding positions include Q70, E92–R94, and T114. Catalysis depends on D126, which acts as the Proton acceptor. The Nucleophile role is filled by R128. The GTP site is built by T149 and K154.

This sequence belongs to the GTP cyclohydrolase II family. In terms of assembly, homodimer. Requires Zn(2+) as cofactor.

The catalysed reaction is GTP + 4 H2O = 2,5-diamino-6-hydroxy-4-(5-phosphoribosylamino)-pyrimidine + formate + 2 phosphate + 3 H(+). It participates in cofactor biosynthesis; riboflavin biosynthesis; 5-amino-6-(D-ribitylamino)uracil from GTP: step 1/4. Functionally, catalyzes the conversion of GTP to 2,5-diamino-6-ribosylamino-4(3H)-pyrimidinone 5'-phosphate (DARP), formate and pyrophosphate. This Proteus mirabilis (strain HI4320) protein is GTP cyclohydrolase-2.